A 588-amino-acid chain; its full sequence is Adenine deaminase (588 aa).

The protein belongs to the metallo-dependent hydrolases superfamily. Adenine deaminase family. In terms of assembly, homodimer. The cofactor is Mn(2+).

The catalysed reaction is adenine + H2O + H(+) = hypoxanthine + NH4(+). This chain is Adenine deaminase, found in Escherichia coli (strain 55989 / EAEC).